Reading from the N-terminus, the 415-residue chain is F-box/kelch-repeat protein At2g29600 (415 aa).

The interval 1–58 (MASISETSDDGSNGGDPNQKPEEPHKNPQEGKEEENQNEKPKEDDHQEEEVENVPQIP) is disordered. Positions 19–45 (QKPEEPHKNPQEGKEEENQNEKPKEDD) are enriched in basic and acidic residues. In terms of domain architecture, F-box spans 56–103 (QIPPQMPLELIVSTIATLRRCHYPTLSLLSDSFRQVISSVDLFQTRSL). Kelch repeat units lie at residues 161-208 (KIYV…VIDG), 210-254 (IYVV…FNVH), 260-309 (KIYI…AVVP), and 311-355 (HLHV…KLMI).

The chain is F-box/kelch-repeat protein At2g29600 from Arabidopsis thaliana (Mouse-ear cress).